The following is a 591-amino-acid chain: V-type ATP synthase alpha chain (591 aa).

Residue G242–T249 coordinates ATP.

The protein belongs to the ATPase alpha/beta chains family.

The catalysed reaction is ATP + H2O + 4 H(+)(in) = ADP + phosphate + 5 H(+)(out). In terms of biological role, produces ATP from ADP in the presence of a proton gradient across the membrane. The V-type alpha chain is a catalytic subunit. The chain is V-type ATP synthase alpha chain from Chlamydia trachomatis serovar L2 (strain ATCC VR-902B / DSM 19102 / 434/Bu).